The primary structure comprises 361 residues: Probable G-protein coupled receptor 25 (361 aa).

Residues 1-39 (MAPTEPWSPSPGSAPWDYSGLDGLEELELCPAGDLPYGY) are Extracellular-facing. A helical membrane pass occupies residues 40–60 (VYIPALYLAAFAVGLLGNAFV). The Cytoplasmic segment spans residues 61-75 (VWLLAGRRGPRRLVD). The helical transmembrane segment at 76–96 (TFVLHLAAADLGFVLTLPLWA) threads the bilayer. Residues 97 to 126 (AAAALGGRWPFGDGLCKLSSFALAGTRCAG) are Extracellular-facing. A helical membrane pass occupies residues 127–147 (ALLLAGMSVDRYLAVVKLLEA). Residues 148–155 (RPLRTPRC) lie on the Cytoplasmic side of the membrane. Residues 156–176 (ALASCCGVWAVALLAGLPSLV) form a helical membrane-spanning segment. At 177-200 (YRGLQPLPGGQDSQCGEEPSHAFQ) the chain is on the extracellular side. A helical transmembrane segment spans residues 201–220 (GLSLLLLLLTFVLPLVVTLF). The Cytoplasmic segment spans residues 221-242 (CYCRISRRLRRPPHVGRARRNS). The helical transmembrane segment at 243–263 (LRIIFAIESTFVGSWLPFSAL) threads the bilayer. Residues 264 to 289 (RAVFHLARLGALPLPCPLLLALRWGL) lie on the Extracellular side of the membrane. A helical transmembrane segment spans residues 290–310 (TIATCLAFVNSCANPLIYLLL). The Cytoplasmic segment spans residues 311–361 (DRSFRARALDGACGRTGRLARRISSASSLSRDDSSVFRCRAQAANTASASW).

It belongs to the G-protein coupled receptor 1 family.

The protein resides in the cell membrane. Its function is as follows. Orphan receptor. The chain is Probable G-protein coupled receptor 25 (GPR25) from Homo sapiens (Human).